A 316-amino-acid polypeptide reads, in one-letter code: 2,3-dihydroxyphenylpropionate/2,3-dihydroxicinnamic acid 1,2-dioxygenase (316 aa).

Residue H118 is the Proton donor of the active site. The active-site Proton acceptor is the H182.

It belongs to the LigB/MhpB extradiol dioxygenase family. In terms of assembly, homotetramer. Requires Fe(2+) as cofactor.

The catalysed reaction is 3-(2,3-dihydroxyphenyl)propanoate + O2 = (2Z,4E)-2-hydroxy-6-oxonona-2,4-dienedioate + H(+). It catalyses the reaction (2E)-3-(2,3-dihydroxyphenyl)prop-2-enoate + O2 = (2Z,4E,7E)-2-hydroxy-6-oxonona-2,4,7-trienedioate + H(+). The protein operates within aromatic compound metabolism; 3-phenylpropanoate degradation. Functionally, catalyzes the non-heme iron(II)-dependent oxidative cleavage of 2,3-dihydroxyphenylpropionic acid and 2,3-dihydroxicinnamic acid into 2-hydroxy-6-ketononadienedioate and 2-hydroxy-6-ketononatrienedioate, respectively. In Mycolicibacterium vanbaalenii (strain DSM 7251 / JCM 13017 / BCRC 16820 / KCTC 9966 / NRRL B-24157 / PYR-1) (Mycobacterium vanbaalenii), this protein is 2,3-dihydroxyphenylpropionate/2,3-dihydroxicinnamic acid 1,2-dioxygenase.